The following is a 477-amino-acid chain: Pentatricopeptide repeat-containing protein At5g47360 (477 aa).

PPR repeat units follow at residues 129–163, 164–198, 199–233, 234–264, 273–307, 308–343, 344–378, 379–413, and 416–450; these read NVKTMRIVLTLCNQANLADEALWVLRKFPEFNVCA, DTVAYNLVIRLFADKGDLNIADMLIKEMDCVGLYP, DVITYTSMINGYCNAGKIDDAWRLAKEMSKHDCVL, NSVTYSRILEGVCKSGDMERALELLAEMEKE, NAVTYTLVIQAFCEKRRVEEALLVLDRMGNRGCMP, NRVTACVLIQGVLENDEDVKALSKLIDKLVKLGGVS, LSECFSSATVSLIRMKRWEEAEKIFRLMLVRGVRP, DGLACSHVFRELCLLERYLDCFLLYQEIEKKDVKS, and DSDIHAVLLLGLCQQGNSWEAAKLAKSMLDKKMRL.

Belongs to the PPR family. P subfamily.

This chain is Pentatricopeptide repeat-containing protein At5g47360, found in Arabidopsis thaliana (Mouse-ear cress).